The primary structure comprises 176 residues: RNA pyrophosphohydrolase (176 aa).

The region spanning 6 to 149 is the Nudix hydrolase domain; it reads GYRPNVGIVI…KRDVYRRVMK (144 aa). Residues 38-59 carry the Nudix box motif; it reads GGINPGESPEQAMYRELYEEVG.

It belongs to the Nudix hydrolase family. RppH subfamily. A divalent metal cation is required as a cofactor.

Accelerates the degradation of transcripts by removing pyrophosphate from the 5'-end of triphosphorylated RNA, leading to a more labile monophosphorylated state that can stimulate subsequent ribonuclease cleavage. This Photorhabdus laumondii subsp. laumondii (strain DSM 15139 / CIP 105565 / TT01) (Photorhabdus luminescens subsp. laumondii) protein is RNA pyrophosphohydrolase.